We begin with the raw amino-acid sequence, 365 residues long: Caffeic acid 3-O-methyltransferase (365 aa).

Residue N133 coordinates (E)-ferulate. The S-adenosyl-L-homocysteine site is built by G210, D233, D253, M254, M266, and K267. The active-site Proton acceptor is the H271. A (E)-5-hydroxyferulate-binding site is contributed by D272.

Belongs to the class I-like SAM-binding methyltransferase superfamily. Cation-independent O-methyltransferase family. COMT subfamily. As to quaternary structure, homodimer.

The enzyme catalyses (E)-caffeate + S-adenosyl-L-methionine = (E)-ferulate + S-adenosyl-L-homocysteine + H(+). It catalyses the reaction (E)-5-hydroxyferulate + S-adenosyl-L-methionine = (E)-sinapate + S-adenosyl-L-homocysteine + H(+). Its pathway is aromatic compound metabolism; phenylpropanoid biosynthesis. Its activity is regulated as follows. Inhibited by Cu(2+), and to a lesser extent by Ni(2+), Mn(2+), Co(2+), Fe(3+) and Zn(2+). Unaffected by Fe(2+) and Mg(2+). In terms of biological role, catalyzes the conversion of caffeic acid to ferulic acid and of 5-hydroxyferulic acid to sinapic acid. The resulting products may subsequently be converted to the corresponding alcohols that are incorporated into lignins. The chain is Caffeic acid 3-O-methyltransferase from Ammi majus (Bishop's weed).